The following is a 108-amino-acid chain: Thiosulfate sulfurtransferase GlpE (108 aa).

In terms of domain architecture, Rhodanese spans Q17–A105. C65 (cysteine persulfide intermediate) is an active-site residue.

The protein belongs to the GlpE family.

The protein resides in the cytoplasm. It carries out the reaction thiosulfate + hydrogen cyanide = thiocyanate + sulfite + 2 H(+). The enzyme catalyses thiosulfate + [thioredoxin]-dithiol = [thioredoxin]-disulfide + hydrogen sulfide + sulfite + 2 H(+). In terms of biological role, transferase that catalyzes the transfer of sulfur from thiosulfate to thiophilic acceptors such as cyanide or dithiols. May function in a CysM-independent thiosulfate assimilation pathway by catalyzing the conversion of thiosulfate to sulfite, which can then be used for L-cysteine biosynthesis. The chain is Thiosulfate sulfurtransferase GlpE from Escherichia coli O45:K1 (strain S88 / ExPEC).